Here is a 311-residue protein sequence, read N- to C-terminus: Homoserine O-acetyltransferase (311 aa).

The active-site Acyl-thioester intermediate is C142. Residues K163 and S192 each coordinate substrate. H235 serves as the catalytic Proton acceptor. Residue E237 is part of the active site. R249 lines the substrate pocket.

This sequence belongs to the MetA family.

It is found in the cytoplasm. It catalyses the reaction L-homoserine + acetyl-CoA = O-acetyl-L-homoserine + CoA. The protein operates within amino-acid biosynthesis; L-methionine biosynthesis via de novo pathway; O-acetyl-L-homoserine from L-homoserine: step 1/1. Functionally, transfers an acetyl group from acetyl-CoA to L-homoserine, forming acetyl-L-homoserine. This is Homoserine O-acetyltransferase from Lysinibacillus sphaericus (strain C3-41).